A 457-amino-acid chain; its full sequence is MRYLCRAQLLSLLLLPLLKARLSVPAHPIPKIFLPLMISTWNYTDANREAWTVLRQGPRRTRQAVIQGCLHCQNSNSCGRLLGGHSAPDSSGGITLEAALIDGANMDYGAVAGMAGIRNAIGVAHDVLRYTNHSLLVGEAAARFAEAMGHKKEVHSLSTTLDVLLPWLLGKCQPNFWRNVRPLANDSCGTFSPLPQEQHQREMRQEYPIEPGHHDQVGFLALDTEGHLHAASLSSGARFRIPGRVGDAAVPGAGIYADNQVGGALATGDGDVLMRFLPALLAVEALRAGQSPASAAEAVMRRLLRHHTEFNGGLVVVSRGGVYSAACAGLDEFQFVVSGESSGRSMRRVEGIKCLDRHEVVTGGPRGNFYVVPKKIWAAGGEDVLVQRVEKITLNEGVDSREFEEEYVEDKAAEIDVDEGEKAEEVRSLLDESPGDLLLHQLGLAPPFPFRFPFIYF.

An N-terminal signal peptide occupies residues 1–20; that stretch reads MRYLCRAQLLSLLLLPLLKA. Intrachain disulfides connect cysteine 72/cysteine 78, cysteine 172/cysteine 188, and cysteine 327/cysteine 354.

It belongs to the Ntn-hydrolase family.

This Drosophila pseudoobscura pseudoobscura (Fruit fly) protein is L-asparaginase-like protein GA18140.